The primary structure comprises 473 residues: Ribulose bisphosphate carboxylase large chain (473 aa).

Positions Met-1–Ser-2 are excised as a propeptide. Pro-3 carries the post-translational modification N-acetylproline. Lys-14 carries the N6,N6,N6-trimethyllysine modification. The substrate site is built by Asn-123 and Thr-173. Lys-175 (proton acceptor) is an active-site residue. Lys-177 lines the substrate pocket. Mg(2+)-binding residues include Lys-201, Asp-203, and Glu-204. N6-carboxylysine is present on Lys-201. His-294 functions as the Proton acceptor in the catalytic mechanism. 3 residues coordinate substrate: Arg-295, His-327, and Ser-379.

It belongs to the RuBisCO large chain family. Type I subfamily. Heterohexadecamer of 8 large chains and 8 small chains; disulfide-linked. The disulfide link is formed within the large subunit homodimers. Requires Mg(2+) as cofactor. Post-translationally, the disulfide bond which can form in the large chain dimeric partners within the hexadecamer appears to be associated with oxidative stress and protein turnover.

The protein localises to the plastid. It localises to the chloroplast. It catalyses the reaction 2 (2R)-3-phosphoglycerate + 2 H(+) = D-ribulose 1,5-bisphosphate + CO2 + H2O. The catalysed reaction is D-ribulose 1,5-bisphosphate + O2 = 2-phosphoglycolate + (2R)-3-phosphoglycerate + 2 H(+). Functionally, ruBisCO catalyzes two reactions: the carboxylation of D-ribulose 1,5-bisphosphate, the primary event in carbon dioxide fixation, as well as the oxidative fragmentation of the pentose substrate in the photorespiration process. Both reactions occur simultaneously and in competition at the same active site. This is Ribulose bisphosphate carboxylase large chain from Vigna unguiculata (Cowpea).